Consider the following 366-residue polypeptide: Leucine dehydrogenase (366 aa).

Residue K82 is part of the active site. 182–188 (GVGNVAY) lines the NAD(+) pocket.

The protein belongs to the Glu/Leu/Phe/Val dehydrogenases family.

It catalyses the reaction L-leucine + NAD(+) + H2O = 4-methyl-2-oxopentanoate + NH4(+) + NADH + H(+). The protein operates within amino-acid degradation; L-leucine degradation; 4-methyl-2-oxopentanoate from L-leucine (dehydrogenase route): step 1/1. Its function is as follows. Catalyzes the reversible deamination of L-leucine to 4-methyl-2-oxopentanoate. This Bacillus cereus protein is Leucine dehydrogenase (ldh).